Consider the following 360-residue polypeptide: Phenylalanine--tRNA ligase alpha subunit (360 aa).

Glutamate 260 contacts Mg(2+).

Belongs to the class-II aminoacyl-tRNA synthetase family. Phe-tRNA synthetase alpha subunit type 1 subfamily. As to quaternary structure, tetramer of two alpha and two beta subunits. Mg(2+) serves as cofactor.

The protein resides in the cytoplasm. The catalysed reaction is tRNA(Phe) + L-phenylalanine + ATP = L-phenylalanyl-tRNA(Phe) + AMP + diphosphate + H(+). This Sinorhizobium medicae (strain WSM419) (Ensifer medicae) protein is Phenylalanine--tRNA ligase alpha subunit.